A 132-amino-acid polypeptide reads, in one-letter code: Nickel-responsive regulator (132 aa).

Positions 76, 87, 89, and 95 each coordinate Ni(2+).

Belongs to the transcriptional regulatory CopG/NikR family. Homotetramer. It depends on Ni(2+) as a cofactor.

Functionally, transcriptional repressor of the nikABCDE operon. Is active in the presence of excessive concentrations of intracellular nickel. In Klebsiella pneumoniae subsp. pneumoniae (strain ATCC 700721 / MGH 78578), this protein is Nickel-responsive regulator.